The primary structure comprises 59 residues: Cecropin-A2 (59 aa).

The signal sequence occupies residues 1-23 (MNFNKLFAIVLLAALVLLGQTEA).

The protein belongs to the cecropin family.

Its subcellular location is the secreted. In terms of biological role, cecropins have lytic and antibacterial activity against several Gram-positive and Gram-negative bacteria. The polypeptide is Cecropin-A2 (CECA2) (Aedes albopictus (Asian tiger mosquito)).